Consider the following 254-residue polypeptide: 4-hydroxy-tetrahydrodipicolinate reductase (254 aa).

Residues glycine 8–valine 13, glycine 87–threonine 89, and alanine 111–methionine 114 each bind NAD(+). Histidine 143 (proton donor/acceptor) is an active-site residue. Histidine 144 contributes to the (S)-2,3,4,5-tetrahydrodipicolinate binding site. Lysine 147 (proton donor) is an active-site residue. Position 153–154 (glycine 153–threonine 154) interacts with (S)-2,3,4,5-tetrahydrodipicolinate.

It belongs to the DapB family.

The protein resides in the cytoplasm. It catalyses the reaction (S)-2,3,4,5-tetrahydrodipicolinate + NAD(+) + H2O = (2S,4S)-4-hydroxy-2,3,4,5-tetrahydrodipicolinate + NADH + H(+). The catalysed reaction is (S)-2,3,4,5-tetrahydrodipicolinate + NADP(+) + H2O = (2S,4S)-4-hydroxy-2,3,4,5-tetrahydrodipicolinate + NADPH + H(+). It functions in the pathway amino-acid biosynthesis; L-lysine biosynthesis via DAP pathway; (S)-tetrahydrodipicolinate from L-aspartate: step 4/4. Its function is as follows. Catalyzes the conversion of 4-hydroxy-tetrahydrodipicolinate (HTPA) to tetrahydrodipicolinate. This is 4-hydroxy-tetrahydrodipicolinate reductase from Nitratiruptor sp. (strain SB155-2).